The chain runs to 1410 residues: Slit homolog 1 protein (1410 aa).

A signal peptide spans 1 to 16 (MLICFIFILLIPESAT). Residues 17–43 (CPAECVCVDRTVSCVGQQLTEVPQNIP) form the LRRNT 1 domain. 20 LRR repeats span residues 22–42 (VCVD…PQNI), 43–66 (PNDT…DFSS), 67–90 (LMNL…SFSS), 91–114 (LVFL…VFQN), 116–138 (LKLT…QLQG), 140–162 (EFLE…VISS), 163–186 (WVSL…SNAR), 219–242 (TVCA…FMTC), 286–309 (PPST…SFKN), 310–333 (LKNL…AFLG), 335–357 (HNLH…TFEG), 358–381 (LGSL…TFDH), 383–405 (PKLS…TFQN), 407–430 (TSLS…WLAQ), 442–465 (ARCE…KFKC), 489–510 (CDCY…PTSI), 511–535 (PRFA…NIHV), 536–559 (LENL…SFEK), 561–583 (SKLR…VLDE), and 585–607 (SNLE…FFNK). Residues 195 to 243 (NPWNCDCRLRWMRKWLEKAEGQNKTVCATPLNLQGSSIEILQDKFMTCS) form the LRRCT 1 domain. An LRRNT 2 domain is found at 259-286 (ICPLPCTCTGTTVDCRDSGLTYVPTNLP). Positions 417–466 (NPLICDCNLQWLAQINLQKNIETSGARCEQPKRLRKKKFATLPPNKFKCK) constitute an LRRCT 2 domain. Residues 484–511 (ICPTQCDCYGTTVDCNKRGLNTIPTSIP) form the LRRNT 3 domain. The LRRCT 3 domain occupies 619-671 (NDLLCDCRILPLMSWLRSNSSHSIDIPPCQQFQYSDNESDKQRCAAFPEETCS). The region spanning 677-703 (CPPKCSCLDRVVRCSNKNLTSFPSRIP) is the LRRNT 4 domain. 6 LRR repeats span residues 681-703 (CSCL…SRIP), 704-726 (FDTT…DLNR), 727-750 (LYSL…TFSN), 752-774 (TRLS…AFNG), 775-798 (LNAL…AFSN), and 800-823 (TSIT…WFSK). Residues 810–859 (NSLYCDCNMAWFSKWIKSKFIEAGIARCEYPNTVSNQLLLTAQPYQFTCD) enclose the LRRCT 4 domain. EGF-like domains follow at residues 871 to 906 (DLCL…VHCE) and 908 to 945 (QIDA…DYCE). 18 cysteine pairs are disulfide-bonded: C873-C884, C878-C894, C896-C905, C912-C923, C917-C933, C935-C944, C951-C962, C956-C971, C973-C982, C989-C1002, C996-C1011, C1013-C1022, C1029-C1040, C1034-C1049, C1051-C1060, C1076-C1086, C1081-C1097, and C1099-C1108. The region spanning 947-983 (NIDDCVNSKCENGGKCVDLINSYRCDCPMEYEGKHCE) is the EGF-like 1; calcium-binding domain. The EGF-like 3 domain occupies 985–1023 (KLEYCTKKLNPCENNGKCIPINGSYSCMCSPGFTGNNCE). The EGF-like 2; calcium-binding domain occupies 1025 to 1061 (NIDDCKNVECQNGGSCVDGILSYDCLCRPGYAGQYCE). One can recognise an EGF-like 4 domain in the interval 1072-1109 (KTDACQQSACGQGECVASQNSSDFTCKCHEGFSGPSCD). In terms of domain architecture, Laminin G-like spans 1112 to 1285 (MSVGFKNPGA…LENVNTEQSC (174 aa)). An LRR 27 repeat occupies 1197 to 1221 (TSERKCFLQIDKNPVQIVENSGKSD). Intrachain disulfides connect C1259-C1285, C1292-C1302, C1297-C1314, C1316-C1325, C1332-C1368, C1346-C1382, C1357-C1398, and C1361-C1400. An EGF-like 5 domain is found at 1288-1326 (TVNFCAGIDCGNGKCTNNALSPKGYMCQCDSHFSGEHCD). The CTCK domain occupies 1332–1406 (CDKQKFRRHH…QCQCEPTKSV (75 aa)).

In terms of assembly, interacts with eva-1.

The protein resides in the secreted. In terms of biological role, functions as a ligand for sax-3 receptor during larval development. Acts via the sax-3/Robo receptor to direct ventral axon guidance and guidance at the midline during embryonic development. This chain is Slit homolog 1 protein (slt-1), found in Caenorhabditis elegans.